The chain runs to 436 residues: GTPase Der (436 aa).

EngA-type G domains follow at residues 4–167 (PVVA…PKEE) and 176–351 (VKFS…DNHS). GTP-binding positions include 10–17 (GRPNVGKS), 57–61 (DTGGI), 119–122 (NKVD), 182–189 (GRPNVGKS), 229–233 (DTAGM), and 294–297 (NKWD). In terms of domain architecture, KH-like spans 352-436 (LRVQSSMLND…PIRVIARKRK (85 aa)).

The protein belongs to the TRAFAC class TrmE-Era-EngA-EngB-Septin-like GTPase superfamily. EngA (Der) GTPase family. In terms of assembly, associates with the 50S ribosomal subunit.

Functionally, GTPase that plays an essential role in the late steps of ribosome biogenesis. The sequence is that of GTPase Der from Listeria innocua serovar 6a (strain ATCC BAA-680 / CLIP 11262).